We begin with the raw amino-acid sequence, 223 residues long: MSTFAILPVKRFEGAKGRLAGGLAAGPRRALAEAMYVDVLTALRRTQGVDRVLVLTADPGAQRVAEGYDAIPLDDPAEAGQNRAVMRGVAHARELGATRVLCLSGDTPMLDPADLDALLGRPRTADRYVVIVPDRHGEGTNGLLLCPPDGMKPSYGVDSCARHKALAEEAGLAVEIAEIPSVALDVDTPDDLDALRELIASRRGGAAHTRGMLNQLLRTNPKN.

Positions 140, 156, and 159 each coordinate phosphoenolpyruvate.

Belongs to the CofC family.

It catalyses the reaction phosphoenolpyruvate + GTP + H(+) = enolpyruvoyl-2-diphospho-5'-guanosine + diphosphate. The protein operates within cofactor biosynthesis; coenzyme F420 biosynthesis. Its function is as follows. Guanylyltransferase that catalyzes the activation of phosphoenolpyruvate (PEP) as enolpyruvoyl-2-diphospho-5'-guanosine, via the condensation of PEP with GTP. It is involved in the biosynthesis of coenzyme F420, a hydride carrier cofactor. The sequence is that of Phosphoenolpyruvate guanylyltransferase from Conexibacter woesei (strain DSM 14684 / CCUG 47730 / CIP 108061 / JCM 11494 / NBRC 100937 / ID131577).